The sequence spans 1337 residues: MKVTVCFGRTRVVVPCGDGRMKVFSLIQQAVTRYRKAVAKDPNYWIQVHRLEHGDGGILDLDDILCDVADDKDRLVAVFDEQDPHHGGDGTSASSTGTQSPEIFGSELGTNNVSAFRPYQTTSEIEVTPSVLRANMPLHVRRSSDPALTGLSTSVSDNNFSSEEPSRKNPTRWSTTAGFLKQNTTGSPKTCDRKKDENYRSLPRDPSSWSNQFQRDNARSSLSASHPMVDRWLEKQEQDEEGTEEDSSRVEPVGHADTGLENMPNFSLDDMVKLVQVPNDGGPLGIHVVPFSARGGRTLGLLVKRLEKGGKAEQENLFHENDCIVRINDGDLRNRRFEQAQHMFRQAMRARVIWFHVVPAANKEQYEQLSQREMNNYSPGRFSPDSHCVANRSVANNAPQALPRAPRLSQPPEQLDAHPRLPHSAHASTKPPTAPALAPPNVLSTSVGSVYNTKRVGKRLNIQLKKGTEGLGFSITSRDVTIGGSAPIYVKNILPRGAAIQDGRLKAGDRLIEVNGVDLAGKSQEEVVSLLRSTKMEGTVSLLVFRQEEAFHPREMNAEPSQMQSPKETKAEDEDIVLTPDGTREFLTFEVPLNDSGSAGLGVSVKGNRSKENHADLGIFVKSIINGGAASKDGRLRVNDQLIAVNGESLLGKANQEAMETLRRSMSTEGNKRGMIQLIVARRISRCNELRSPGSPAAPELPIETELDDRERRISHSLYSGIEGLDESPTRNAALSRIMGESGKCQLSPTVNMPHDDTVMIEDDRLPVLPPHLSDQSSSSSHDDVGFIMTEAGTWAKATISDSADCSLSPDVDPVLAFQREGFGRQSMSEKRTKQFSNASQLDFVKTRKSKSMDLGIADETKLNTVDDQRAGSPNRDVGPSLGLKKSSSLESLQTAVAEVTLNGNIPFHRPRPRIIRGRGCNESFRAAIDKSYDKPMVDDDDEGMETLEEDTEESSRSGRESVSTSSDQPSYSLERQMNGDPEKRDKAEKKKDKAGKDKKKDREKEKDKLKAKKGMLKGLGDMFRFGKHRKDDKMEKMGRIKIQDSFTSEEDRVRMKEEQERIQAKTREFRERQARERDYAEIQDFHRTFGCDDELLYGGMSSYDGCLALNARPQSPREGHLMDTLYAQVKKPRSSKPGDSNRSTPSNHDRIQRLRQEFQQAKQDEDVEDRRRTYSFEQSWSSSRPASQSGRHSVSVEVQVQRQRQEERESFQQAQRQYSSLPRQSRKNASSVSQDSWEQNYAPGEGFQSAKENPRYSSYQGSRNGYLGGHGFNARVMLETQELLRQEQRRKEQQLKKQPPADGVRGPFRQDVPPSPSQVARLNRLQTPEKGRPFYS.

Ser25 is modified (phosphoserine). Disordered stretches follow at residues 81 to 109 (EQDP…SELG) and 143 to 263 (SSDP…LENM). Thr91 carries the phosphothreonine modification. A compositionally biased stretch (low complexity) spans 91–100 (TSASSTGTQS). Composition is skewed to polar residues over residues 150 to 163 (GLST…FSSE) and 171 to 188 (TRWS…TGSP). Phosphoserine occurs at positions 156 and 174. Residues 190 to 203 (TCDRKKDENYRSLP) are compositionally biased toward basic and acidic residues. Over residues 207 to 224 (SSWSNQFQRDNARSSLSA) the composition is skewed to polar residues. The PDZ 1 domain occupies 271–359 (MVKLVQVPND…ARVIWFHVVP (89 aa)). Ser383 is modified (phosphoserine). A disordered region spans residues 397-441 (NAPQALPRAPRLSQPPEQLDAHPRLPHSAHASTKPPTAPALAPPN). 2 PDZ domains span residues 461 to 546 (NIQL…LVFR) and 590 to 677 (EVPL…GMIQ). The residue at position 489 (Tyr489) is a Phosphotyrosine. Phosphoserine is present on residues Ser692, Ser695, Ser715, Ser728, Ser809, and Ser827. Residues 712–936 (RRISHSLYSG…AAIDKSYDKP (225 aa)) are interaction with PRKCI and PRKCZ. Lys834 carries the post-translational modification N6-acetyllysine. Ser837 is subject to Phosphoserine. Lys851 bears the N6-acetyllysine mark. Phosphoserine is present on residues Ser852 and Ser873. 5 disordered regions span residues 866–888 (VDDQ…KKSS), 932–1015 (SYDK…AKKG), 1028–1055 (KHRK…DRVR), 1110–1271 (LNAR…LGGH), and 1284–1337 (LLRQ…PFYS). The residue at position 885 (Lys885) is an N6-acetyllysine. Residues 935–1337 (KPMVDDDDEG…TPEKGRPFYS (403 aa)) are interaction with FRMD4A. The span at 939–953 (DDDDEGMETLEEDTE) shows a compositional bias: acidic residues. Residue Ser962 is modified to Phosphoserine; by AURKA. Residues Ser971 and Ser973 each carry the phosphoserine modification. 2 stretches are compositionally biased toward basic and acidic residues: residues 981–1009 (DPEK…EKDK) and 1030–1043 (RKDD…RIKI). Ser1046 carries the phosphoserine modification. Positions 1050 to 1082 (EEDRVRMKEEQERIQAKTREFRERQARERDYAE) form a coiled coil. Over residues 1138–1147 (PGDSNRSTPS) the composition is skewed to polar residues. Over residues 1148 to 1175 (NHDRIQRLRQEFQQAKQDEDVEDRRRTY) the composition is skewed to basic and acidic residues. Coiled-coil stretches lie at residues 1149-1172 (HDRI…EDRR), 1199-1222 (VQVQ…YSSL), and 1278-1299 (MLET…LKKQ). A compositionally biased stretch (low complexity) spans 1180–1203 (SWSSSRPASQSGRHSVSVEVQVQR). A compositionally biased stretch (polar residues) spans 1219–1240 (YSSLPRQSRKNASSVSQDSWEQ). Residues 1284 to 1296 (LLRQEQRRKEQQL) show a composition bias toward basic and acidic residues. Over residues 1318-1327 (SQVARLNRLQ) the composition is skewed to polar residues. Positions 1328–1337 (TPEKGRPFYS) are enriched in basic and acidic residues. Lys1331 carries the N6-acetyllysine modification.

Belongs to the PAR3 family. As to quaternary structure, component of a complex whose core is composed of ARHGAP17, AMOT, PALS1, PATJ and PARD3/PAR3. Interacts (via PDZ 1 domain) with PARD6A, PARD6B and F11R/JAM1. Interacts with AURKA, AURKB and SIRT2. Interacts with PRKCI. Interacts with PRKCZ. Part of a complex with PARD6A or PARD6B, PRKCI or PRKCZ and CDC42 or RAC1. Interacts with LIMK2 and CDH5. Component of the Par polarity complex, composed of at least phosphorylated PRKCZ, PARD3 and TIAM1. Directly interacts with TIAM1 and TIAM2. Interacts with ECT2 and FBF1. Interacts (via PDZ 3 domain) with PTEN (via C-terminus). Interacts (via coiled-coil domain) with FRMD4A. Found in a complex with PARD3, CYTH1 and FRMD4A. Interacts with SAPCD2. Interacts with PRKCA. In terms of assembly, interacts with PRKCZ. In terms of processing, acetylated. Deacetylated by SIRT2, thereby inhibiting Schwann cell peripheral myelination. Phosphorylation at Ser-827 by PRKCZ and PRKCI occurs at the most apical tip of epithelial cell-cell contacts during the initial phase of tight junction formation and may promote dissociation of the complex with PARD6. EGF-induced Tyr-1127 phosphorylation mediates dissociation from LIMK2. Phosphorylation by AURKA at Ser-962 is required for the normal establishment of neuronal polarity. As to expression, isoform 1 is predominantly expressed in lung, glandular stomach, prostate, ovary and uterus. Isoform 1 is also expressed in brain, with a high expression in the cortex, hippocampus and in the striatum. Isoform 2 is predominantly expressed in intestinal epithelial cells, kidney and prostate.

The protein resides in the cytoplasm. It localises to the endomembrane system. The protein localises to the cell junction. It is found in the tight junction. Its subcellular location is the adherens junction. The protein resides in the cell cortex. It localises to the cytoskeleton. The protein localises to the cell membrane. In terms of biological role, adapter protein involved in asymmetrical cell division and cell polarization processes. Seems to play a central role in the formation of epithelial tight junctions. Association with PARD6B may prevent the interaction of PARD3 with F11R/JAM1, thereby preventing tight junction assembly. The PARD6-PARD3 complex links GTP-bound Rho small GTPases to atypical protein kinase C proteins. Required for establishment of neuronal polarity and normal axon formation in cultured hippocampal neurons. Involved in Schwann cell peripheral myelination. Targets the phosphatase PTEN to cell junctions. The protein is Partitioning defective 3 homolog (Pard3) of Rattus norvegicus (Rat).